The sequence spans 214 residues: Methyltransferase HEMK2 (214 aa).

Positions 29, 51, 53, 77, 103, 104, and 122 each coordinate S-adenosyl-L-methionine. Residue asparagine 122 coordinates a protein.

It belongs to the eukaryotic/archaeal PrmC-related family. In terms of assembly, heterodimer; heterodimerization with TRMT112 is required for S-adenosyl-L-methionine-binding. In terms of processing, ubiquitinated, leading to its degradation by the proteasome. As to expression, highly expressed in undifferentiated embryonic stem cells (at protein level). Also expressed in testis and brain, weakly expressed in differentiated embryonic stem cells and kidney. Not expressed in muscle, heart, placenta, pancreas, lung and stomach.

The protein localises to the nucleus. It carries out the reaction L-lysyl-[histone] + S-adenosyl-L-methionine = N(6)-methyl-L-lysyl-[histone] + S-adenosyl-L-homocysteine + H(+). It catalyses the reaction L-glutaminyl-[protein] + S-adenosyl-L-methionine = N(5)-methyl-L-glutaminyl-[protein] + S-adenosyl-L-homocysteine + H(+). The enzyme catalyses methylarsonous acid + S-adenosyl-L-methionine = dimethylarsinate + S-adenosyl-L-homocysteine + 2 H(+). In terms of biological role, methyltransferase that can methylate proteins and, to a lower extent, arsenic. Catalytic subunit of a heterodimer with TRMT112, which monomethylates 'Lys-12' of histone H4 (H4K12me1), a modification present at the promoters of numerous genes encoding cell cycle regulators. Catalytic subunit of a heterodimer with TRMT112, which catalyzes N5-methylation of Glu residue of proteins with a Gly-Gln-Xaa-Xaa-Xaa-Arg motif. Methylates ETF1 on 'Gln-185'; ETF1 needs to be complexed to ERF3 in its GTP-bound form to be efficiently methylated. May also play a role in the modulation of arsenic-induced toxicity by mediating the conversion of monomethylarsonous acid (3+) into the less toxic dimethylarsonic acid. It however only plays a limited role in arsenic metabolism compared with AS3MT. The sequence is that of Methyltransferase HEMK2 from Mus musculus (Mouse).